Reading from the N-terminus, the 317-residue chain is Serpentine receptor class delta-44 (317 aa).

6 consecutive transmembrane segments (helical) span residues 5-25, 90-110, 130-150, 185-205, 235-255, and 264-284; these read ILSV…IILI, MFHI…LTTF, ILFI…LVII, RVNG…CLLL, IFGH…SLIT, and FFIF…TMYF.

This sequence belongs to the nematode receptor-like protein srd family.

The protein localises to the membrane. The sequence is that of Serpentine receptor class delta-44 (srd-44) from Caenorhabditis elegans.